The following is a 376-amino-acid chain: Aspartate-semialdehyde dehydrogenase (376 aa).

NADP(+) is bound by residues arginine 11–valine 14, threonine 38–serine 39, and glutamine 74. Arginine 103 serves as a coordination point for phosphate. Catalysis depends on cysteine 136, which acts as the Acyl-thioester intermediate. Glutamine 163 serves as a coordination point for substrate. NADP(+) is bound by residues serine 166–glycine 167 and proline 194. Glutamate 242 provides a ligand contact to substrate. Lysine 245 contributes to the phosphate binding site. Residue arginine 273 participates in substrate binding. Catalysis depends on histidine 280, which acts as the Proton acceptor. Glutamine 356 contacts NADP(+).

This sequence belongs to the aspartate-semialdehyde dehydrogenase family. Homodimer.

It catalyses the reaction L-aspartate 4-semialdehyde + phosphate + NADP(+) = 4-phospho-L-aspartate + NADPH + H(+). It functions in the pathway amino-acid biosynthesis; L-lysine biosynthesis via DAP pathway; (S)-tetrahydrodipicolinate from L-aspartate: step 2/4. It participates in amino-acid biosynthesis; L-methionine biosynthesis via de novo pathway; L-homoserine from L-aspartate: step 2/3. The protein operates within amino-acid biosynthesis; L-threonine biosynthesis; L-threonine from L-aspartate: step 2/5. Functionally, catalyzes the NADPH-dependent formation of L-aspartate-semialdehyde (L-ASA) by the reductive dephosphorylation of L-aspartyl-4-phosphate. The protein is Aspartate-semialdehyde dehydrogenase of Bordetella pertussis (strain Tohama I / ATCC BAA-589 / NCTC 13251).